The primary structure comprises 339 residues: Phenylalanine--tRNA ligase alpha subunit (339 aa).

Position 254 (Glu-254) interacts with Mg(2+).

It belongs to the class-II aminoacyl-tRNA synthetase family. Phe-tRNA synthetase alpha subunit type 1 subfamily. Tetramer of two alpha and two beta subunits. The cofactor is Mg(2+).

It is found in the cytoplasm. It catalyses the reaction tRNA(Phe) + L-phenylalanine + ATP = L-phenylalanyl-tRNA(Phe) + AMP + diphosphate + H(+). The sequence is that of Phenylalanine--tRNA ligase alpha subunit (pheS) from Chlamydia pneumoniae (Chlamydophila pneumoniae).